The following is a 172-amino-acid chain: 3-hydroxydecanoyl-[acyl-carrier-protein] dehydratase (172 aa).

His-71 is a catalytic residue.

Belongs to the thioester dehydratase family. FabA subfamily. As to quaternary structure, homodimer.

It is found in the cytoplasm. It carries out the reaction a (3R)-hydroxyacyl-[ACP] = a (2E)-enoyl-[ACP] + H2O. It catalyses the reaction (3R)-hydroxydecanoyl-[ACP] = (2E)-decenoyl-[ACP] + H2O. The catalysed reaction is (2E)-decenoyl-[ACP] = (3Z)-decenoyl-[ACP]. The protein operates within lipid metabolism; fatty acid biosynthesis. In terms of biological role, necessary for the introduction of cis unsaturation into fatty acids. Catalyzes the dehydration of (3R)-3-hydroxydecanoyl-ACP to E-(2)-decenoyl-ACP and then its isomerization to Z-(3)-decenoyl-ACP. Can catalyze the dehydratase reaction for beta-hydroxyacyl-ACPs with saturated chain lengths up to 16:0, being most active on intermediate chain length. The polypeptide is 3-hydroxydecanoyl-[acyl-carrier-protein] dehydratase (Pseudoalteromonas atlantica (strain T6c / ATCC BAA-1087)).